The sequence spans 212 residues: Peptide methionine sulfoxide reductase MsrA (212 aa).

Residue Cys-52 is part of the active site.

Belongs to the MsrA Met sulfoxide reductase family.

It catalyses the reaction L-methionyl-[protein] + [thioredoxin]-disulfide + H2O = L-methionyl-(S)-S-oxide-[protein] + [thioredoxin]-dithiol. The enzyme catalyses [thioredoxin]-disulfide + L-methionine + H2O = L-methionine (S)-S-oxide + [thioredoxin]-dithiol. Functionally, has an important function as a repair enzyme for proteins that have been inactivated by oxidation. Catalyzes the reversible oxidation-reduction of methionine sulfoxide in proteins to methionine. This chain is Peptide methionine sulfoxide reductase MsrA, found in Escherichia coli O17:K52:H18 (strain UMN026 / ExPEC).